The following is a 506-amino-acid chain: Tabersonine 3-oxygenase (506 aa).

At 1–5 (MEFHE) the chain is on the lumenal side. The chain crosses the membrane as a helical span at residues 6–26 (SSPFVFITRGFIFIAISIAVL). The Cytoplasmic segment spans residues 27–506 (RRIISKKTKT…DLQLIATSYA (480 aa)). A heme-binding site is contributed by C450.

It belongs to the cytochrome P450 family. Heme is required as a cofactor. Expressed in leaf epidermis.

The protein localises to the endoplasmic reticulum membrane. It carries out the reaction 16-methoxytabersonine + reduced [NADPH--hemoprotein reductase] + O2 = (3R)-1,2-didehydro-3-hydroxy-16-methoxy-2,3-dihydrotabersonine + oxidized [NADPH--hemoprotein reductase] + H2O + H(+). The catalysed reaction is (-)-tabersonine + reduced [NADPH--hemoprotein reductase] + O2 = (3R)-1,2-didehydro-3-hydroxy-2,3-dihydrotabersonine + oxidized [NADPH--hemoprotein reductase] + H2O + H(+). It participates in alkaloid biosynthesis; vindoline biosynthesis. In terms of biological role, cytochrome P450 catalyzing the monooxygenation of 16-methoxytabersonine, 16-hydroxytabersonine and tabersonine, but not of 2,3-dihydrotabersonine. Converts the C2,C3 alkene of tabersonine and 16-methoxytabersonine to the epoxides, which then spontaneously open to form the corresponding imine alcohols. Inactive in converting amyrin to ursolic acid. The polypeptide is Tabersonine 3-oxygenase (Catharanthus roseus (Madagascar periwinkle)).